The chain runs to 148 residues: Deoxyuridine 5'-triphosphate nucleotidohydrolase (148 aa).

Substrate-binding positions include 67-69 (RSG), asparagine 80, 84-86 (LID), and methionine 94.

Belongs to the dUTPase family. Mg(2+) is required as a cofactor.

It catalyses the reaction dUTP + H2O = dUMP + diphosphate + H(+). It participates in pyrimidine metabolism; dUMP biosynthesis; dUMP from dCTP (dUTP route): step 2/2. In terms of biological role, this enzyme is involved in nucleotide metabolism: it produces dUMP, the immediate precursor of thymidine nucleotides and it decreases the intracellular concentration of dUTP so that uracil cannot be incorporated into DNA. This Burkholderia multivorans (strain ATCC 17616 / 249) protein is Deoxyuridine 5'-triphosphate nucleotidohydrolase.